Here is a 201-residue protein sequence, read N- to C-terminus: Small ribosomal subunit protein uS4c (201 aa).

The segment at 15 to 43 is disordered; the sequence is LGALPGLTRKTPKSGSNQKKKFHSGKKEQ. The S4 RNA-binding domain maps to 89–150; that stretch reads MRLDNILFRL…NQRSKRLVQN (62 aa).

The protein belongs to the universal ribosomal protein uS4 family. As to quaternary structure, part of the 30S ribosomal subunit. Contacts protein S5. The interaction surface between S4 and S5 is involved in control of translational fidelity.

It localises to the plastid. The protein resides in the chloroplast. Its function is as follows. One of the primary rRNA binding proteins, it binds directly to 16S rRNA where it nucleates assembly of the body of the 30S subunit. With S5 and S12 plays an important role in translational accuracy. In Sorghum bicolor (Sorghum), this protein is Small ribosomal subunit protein uS4c (rps4).